A 355-amino-acid polypeptide reads, in one-letter code: WAT1-related protein At3g28130 (355 aa).

10 helical membrane passes run 11–31 (AVLL…NTLF), 42–62 (YTFL…SHIF), 80–100 (IGVL…GIEY), 104–124 (TLAS…AIIF), 136–156 (SVAK…VVLY), 186–206 (WIIG…AFIL), 218–238 (FTVS…IGIV), 244–264 (PSIW…GGIF), 290–310 (LSIL…FYLG), and 311–331 (SLVG…GKAK). The region spanning 29-154 (TLFKAATSKG…VSLVGALVVV (126 aa)) is the EamA domain.

It belongs to the drug/metabolite transporter (DMT) superfamily. Plant drug/metabolite exporter (P-DME) (TC 2.A.7.4) family.

The protein resides in the membrane. The polypeptide is WAT1-related protein At3g28130 (Arabidopsis thaliana (Mouse-ear cress)).